The primary structure comprises 512 residues: Transcriptional activator CadC (512 aa).

At 1 to 154 (MQQPVVRVGE…PPEQSPVKSK (154 aa)) the chain is on the cytoplasmic side. The ompR/PhoB-type DNA-binding region spans 3 to 102 (QPVVRVGEWL…VPKRGYKLMV (100 aa)). The helical transmembrane segment at 155 to 180 (RFTTFWVWFFFLLSLGICVALVAFSS) threads the bilayer. Over 181–512 (LDTRLPMSKS…PYLDKFLASE (332 aa)) the chain is Periplasmic. The cysteines at positions 208 and 272 are disulfide-linked.

As to quaternary structure, homodimer. Dimerization of the periplasmic domain is required for activation of the cadBA operon. Interacts strongly with the lysine permease LysP in the absence of lysine or at low lysine concentrations. Interaction is markedly attenuated under increasing lysine levels. Concomitant pH-dependent protonation of periplasmic amino acids in both proteins dissolves their electrostatic connections resulting in further destabilization of the CadC/LysP interaction. In terms of processing, contains a functionally important disulfide bond, which may provide structural support for the pH-dependent activation via a switch of the sensor between the inactive and active state.

The protein resides in the cell inner membrane. Activation of CadC requires two stimuli, lysine and low pH. CadC shows an extremely low affinity for lysine, and it senses the extracellular lysine not directly but indirectly via interaction with the lysine permease LysP. At a low external lysine concentration, CadC is inactivated by an interaction with LysP. When lysine is abundantly available, the interaction between LysP and CadC is released, and CadC becomes susceptible to activation by low pH. Acidification of the external milieu is sensed by protonation of a patch of acidic amino acids within the periplasmic domain and associated to conformational and/or oligomerization effects. The pH-dependent regulation may be due to the presence/absence of a disulfide bond within the periplasmic domain. At pH 7.6, a disulfide bond is found in the inactive state of CadC. At pH 5.8, disulfide bond formation is prevented, which transforms CadC into a semi-active state with respect to both the pH and the lysine stimuli. Activity is also feedback inhibited by cadaverine. Cadaverine binds first to the central cavity, which putatively triggers intramolecular rearrangements to expose the binding sites for cadaverine at the dimer interface, which inactivates CadC and consequently shuts off transcription of the cadBA operon. In terms of biological role, regulates the lysine- and pH-dependent expression of the lysine decarboxylase CadA and the cadaverine-lysine antiporter CadB. At low external pH, and in the presence of external lysine, CadC activates transcription of the cadBA operon by binding directly to two sites, Cad1 and Cad2, within the cadBA promoter region (Pcad). Preferentially binds to AT-rich regions within the Cad1 promoter. This Escherichia coli (strain K12) protein is Transcriptional activator CadC (cadC).